The primary structure comprises 402 residues: Alanine racemase (402 aa).

Lys-34 serves as the catalytic Proton acceptor; specific for D-alanine. Lys-34 bears the N6-(pyridoxal phosphate)lysine mark. Residue Arg-133 coordinates substrate. In terms of domain architecture, RPE1 insert spans 226–271 (EVSYNLSYKEKFERNTPALATTVCINKCADVNTRLTYKVPLKGSYR). The active-site Proton acceptor; specific for L-alanine is the Tyr-296. Residue Met-344 participates in substrate binding.

The protein belongs to the alanine racemase family. Requires pyridoxal 5'-phosphate as cofactor.

The enzyme catalyses L-alanine = D-alanine. The protein operates within amino-acid biosynthesis; D-alanine biosynthesis; D-alanine from L-alanine: step 1/1. In terms of biological role, catalyzes the interconversion of L-alanine and D-alanine. May also act on other amino acids. In Rickettsia typhi (strain ATCC VR-144 / Wilmington), this protein is Alanine racemase (alr).